Consider the following 409-residue polypeptide: Glycosyltransferase GtfC (409 aa).

It belongs to the glycosyltransferase 28 family.

It carries out the reaction dTDP-beta-L-vancosamine + devancoaminyl-vancomycin = epivancomycin + dTDP + H(+). The enzyme catalyses chloroorienticin B + dTDP-beta-L-vancosamine = chloroeremomycin + dTDP + H(+). It functions in the pathway antibiotic biosynthesis; vancomycin biosynthesis. Catalyzes the attachment of dTDP-L-4-epi-vancosamine to chloroorienticin B to form chloroeremomycin in the biosynthesis of glycopeptide antibiotic chloroeremomycin, a member of the vancomycin group of antibiotics. Also able to use dTDP-L-4-epi-vancosamine and devancoaminyl-vancomycin (DVV) to create epivancomycin. Acts downstream of GtfA. This Amycolatopsis orientalis (Nocardia orientalis) protein is Glycosyltransferase GtfC (gtfC).